A 441-amino-acid chain; its full sequence is pH-response regulator protein palC (441 aa).

Residues 3-352 (ISYTGQLPTT…GAAYAAILQL (350 aa)) enclose the BRO1 domain. Disordered stretches follow at residues 278 to 304 (RKDDGSPSLAPVSSFESNRDLSSTSSG) and 414 to 441 (KWTPQTSLDLGEDTSSSAPKYSGQGSYY).

It belongs to the palC family.

Its function is as follows. Required for the proteolytic cleavage of the transcription factor RIM101 in response to alkaline ambient pH. The polypeptide is pH-response regulator protein palC (Yarrowia lipolytica (strain CLIB 122 / E 150) (Yeast)).